Here is a 480-residue protein sequence, read N- to C-terminus: tRNA-2-methylthio-N(6)-dimethylallyladenosine synthase (480 aa).

The 118-residue stretch at 32–149 folds into the MTTase N-terminal domain; the sequence is RKLYIRTFGC…LPELIRRRRA (118 aa). Cys41, Cys78, Cys112, Cys186, Cys190, and Cys193 together coordinate [4Fe-4S] cluster. Positions 172 to 405 constitute a Radical SAM core domain; the sequence is RIEGATAFVS…QALINAQAAA (234 aa). The region spanning 408 to 471 is the TRAM domain; that stretch reads QAMVGTRQRL…PNSLRARVAD (64 aa).

The protein belongs to the methylthiotransferase family. MiaB subfamily. In terms of assembly, monomer. It depends on [4Fe-4S] cluster as a cofactor.

It localises to the cytoplasm. It carries out the reaction N(6)-dimethylallyladenosine(37) in tRNA + (sulfur carrier)-SH + AH2 + 2 S-adenosyl-L-methionine = 2-methylsulfanyl-N(6)-dimethylallyladenosine(37) in tRNA + (sulfur carrier)-H + 5'-deoxyadenosine + L-methionine + A + S-adenosyl-L-homocysteine + 2 H(+). Catalyzes the methylthiolation of N6-(dimethylallyl)adenosine (i(6)A), leading to the formation of 2-methylthio-N6-(dimethylallyl)adenosine (ms(2)i(6)A) at position 37 in tRNAs that read codons beginning with uridine. This Bordetella petrii (strain ATCC BAA-461 / DSM 12804 / CCUG 43448) protein is tRNA-2-methylthio-N(6)-dimethylallyladenosine synthase.